A 217-amino-acid polypeptide reads, in one-letter code: Large ribosomal subunit protein eL6 (217 aa).

It belongs to the eukaryotic ribosomal protein eL6 family. In terms of assembly, component of the large ribosomal subunit. May bind IPO9 with low affinity.

The protein resides in the cytoplasm. The protein localises to the cytosol. It is found in the rough endoplasmic reticulum. Functionally, component of the large ribosomal subunit. The sequence is that of Large ribosomal subunit protein eL6 (rpl-6) from Caenorhabditis elegans.